The chain runs to 228 residues: Cytochrome c oxidase subunit 2 (228 aa).

The Mitochondrial intermembrane segment spans residues 1–14 (MAYPLQLGFQDATS). Residues 15 to 45 (PVMEELLHFHDHTLMIIFLISSLVLYIIMLM) form a helical membrane-spanning segment. Topologically, residues 46–59 (LTSKLVHTNMMNVQ) are mitochondrial matrix. The chain crosses the membrane as a helical span at residues 60–87 (EMEMIWTILPAIILILIALPSLHTLYMM). Topologically, residues 88–228 (DEINNPLLTI…FENWSASLAQ (141 aa)) are mitochondrial intermembrane. Residues histidine 161, cysteine 196, glutamate 198, cysteine 200, histidine 204, and methionine 207 each coordinate Cu cation. Glutamate 198 lines the Mg(2+) pocket. Tyrosine 218 carries the post-translational modification Phosphotyrosine.

The protein belongs to the cytochrome c oxidase subunit 2 family. In terms of assembly, component of the cytochrome c oxidase (complex IV, CIV), a multisubunit enzyme composed of 14 subunits. The complex is composed of a catalytic core of 3 subunits MT-CO1, MT-CO2 and MT-CO3, encoded in the mitochondrial DNA, and 11 supernumerary subunits COX4I, COX5A, COX5B, COX6A, COX6B, COX6C, COX7A, COX7B, COX7C, COX8 and NDUFA4, which are encoded in the nuclear genome. The complex exists as a monomer or a dimer and forms supercomplexes (SCs) in the inner mitochondrial membrane with NADH-ubiquinone oxidoreductase (complex I, CI) and ubiquinol-cytochrome c oxidoreductase (cytochrome b-c1 complex, complex III, CIII), resulting in different assemblies (supercomplex SCI(1)III(2)IV(1) and megacomplex MCI(2)III(2)IV(2)). Found in a complex with TMEM177, COA6, COX18, COX20, SCO1 and SCO2. Interacts with TMEM177 in a COX20-dependent manner. Interacts with COX20. Interacts with COX16. It depends on Cu cation as a cofactor.

Its subcellular location is the mitochondrion inner membrane. The enzyme catalyses 4 Fe(II)-[cytochrome c] + O2 + 8 H(+)(in) = 4 Fe(III)-[cytochrome c] + 2 H2O + 4 H(+)(out). Its function is as follows. Component of the cytochrome c oxidase, the last enzyme in the mitochondrial electron transport chain which drives oxidative phosphorylation. The respiratory chain contains 3 multisubunit complexes succinate dehydrogenase (complex II, CII), ubiquinol-cytochrome c oxidoreductase (cytochrome b-c1 complex, complex III, CIII) and cytochrome c oxidase (complex IV, CIV), that cooperate to transfer electrons derived from NADH and succinate to molecular oxygen, creating an electrochemical gradient over the inner membrane that drives transmembrane transport and the ATP synthase. Cytochrome c oxidase is the component of the respiratory chain that catalyzes the reduction of oxygen to water. Electrons originating from reduced cytochrome c in the intermembrane space (IMS) are transferred via the dinuclear copper A center (CU(A)) of subunit 2 and heme A of subunit 1 to the active site in subunit 1, a binuclear center (BNC) formed by heme A3 and copper B (CU(B)). The BNC reduces molecular oxygen to 2 water molecules using 4 electrons from cytochrome c in the IMS and 4 protons from the mitochondrial matrix. This chain is Cytochrome c oxidase subunit 2 (MT-CO2), found in Loxodonta africana (African elephant).